Consider the following 388-residue polypeptide: Protochlorophyllide reductase A, chloroplastic (388 aa).

Residues 1–74 constitute a chloroplast transit peptide; it reads MALQLLPSTL…KPSGKKTLRQ (74 aa).

It belongs to the short-chain dehydrogenases/reductases (SDR) family. POR subfamily.

It localises to the plastid. Its subcellular location is the chloroplast. It catalyses the reaction chlorophyllide a + NADP(+) = protochlorophyllide a + NADPH + H(+). The protein operates within porphyrin-containing compound metabolism; chlorophyll biosynthesis. Its function is as follows. Phototransformation of protochlorophyllide (Pchlide) to chlorophyllide (Chlide). In Triticum aestivum (Wheat), this protein is Protochlorophyllide reductase A, chloroplastic (PORA).